We begin with the raw amino-acid sequence, 225 residues long: MAGGGAGDPGLGAAAAPAPETREHLFKVLVIGELGVGKTSIIKRYVHQLFSQHYRATIGVDFALKVLNWDSRTLVRLQLWDIAGQERFGNMTRVYYKEAVGAFVVFDISRSSTFEAVLKWKSDLDSKVHLPNGSPIPAVLLANKCDQNKDSSQSPSQVDQFCKEHGFAGWFETSAKDNINIEEAARFLVEKILVNHQSFPNEENDVDKIKLDQETLRAENKSQCC.

The residue at position 2 (A2) is an N-acetylalanine. Positions 36, 37, 38, 39, 40, 51, 52, 54, and 57 each coordinate GTP. T39 contributes to the Mg(2+) binding site. A Switch 1 motif is present at residues 48–62 (QLFSQHYRATIGVDF). Mg(2+) is bound at residue T57. S71 carries the post-translational modification Phosphoserine. D81 is a binding site for Mg(2+). GTP is bound by residues G84, N143, K144, D146, A175, and K176. Residues 84 to 97 (GQERFGNMTRVYYK) carry the Switch 2 motif. A PKA-RII subunit binding domain region spans residues 178 to 197 (NINIEEAARFLVEKILVNHQ). 2 S-geranylgeranyl cysteine lipidation sites follow: C224 and C225.

It belongs to the small GTPase superfamily. Rab family. As to quaternary structure, interacts with ANKRD27. A decreased interaction with ANKRD27 seen in the presence of SGSM2. Interacts with LRRK2 (via N-terminus); this interaction results in stimulation of RAB10 phosphorylation by LRRK2. It depends on Mg(2+) as a cofactor. Widely expressed with high levels in heart, liver, kidney, bone marrow, testis, colon and fetal lung.

It is found in the mitochondrion. It localises to the mitochondrion outer membrane. The protein localises to the cytoplasmic vesicle. Its subcellular location is the phagosome. The protein resides in the phagosome membrane. It is found in the melanosome. It localises to the melanosome membrane. The enzyme catalyses GTP + H2O = GDP + phosphate + H(+). Regulated by guanine the nucleotide exchange factor (GEF) BLOC-3 complex composed of HPS1 and HPS4 which promote the exchange of bound GDP for free GTP. Regulated by the GTPase activating protein (GAP) SGSM2/RUTBC1 which increases the GTP hydrolysis activity. Inhibited by GDP dissociation inhibitors (GDIs) which prevent Rab-GDP dissociation. The small GTPases Rab are key regulators of intracellular membrane trafficking, from the formation of transport vesicles to their fusion with membranes. Rabs cycle between an inactive GDP-bound form and an active GTP-bound form that is able to recruit to membranes different set of downstream effectors directly responsible for vesicle formation, movement, tethering and fusion. Also acts as an A-kinase anchoring protein by binding to the type II regulatory subunit of protein kinase A and anchoring it to the mitochondrion. Also involved in synchronization of mitochondrial fission. Plays a role in the maturation of phagosomes that engulf pathogens, such as S.aureus and M.tuberculosis. Plays an important role in the control of melanin production and melanosome biogenesis. In concert with RAB38, regulates the proper trafficking of melanogenic enzymes TYR, TYRP1 and DCT/TYRP2 to melanosomes in melanocytes. Stimulates phosphorylation of RAB10 'Thr-73' by LRRK2. The polypeptide is Ras-related protein Rab-32 (Homo sapiens (Human)).